The sequence spans 138 residues: MAIAYFIPDQAQLLARSYQQNGQQTAASPRTTATAAAPSQQQQQSQQQQQQQRHHHQQQRPQFRANISVPLGSQQGSMTMSEFGCWDLLAQIFCYALRIYSYSSSQRQPTVIQISFEISSGGQNNDEDDVTDATSKEN.

Disordered regions lie at residues 21 to 71 (NGQQ…SVPL) and 119 to 138 (SSGGQNNDEDDVTDATSKEN). Residues 23–51 (QQTAASPRTTATAAAPSQQQQQSQQQQQQ) are compositionally biased toward low complexity.

In terms of assembly, interacts with Diap2 (via BIR2 domain).

Functionally, activator of apoptosis, independent of rpr and hid, that acts on the effector Dredd. The sequence is that of Cell death protein Grim (grim) from Drosophila melanogaster (Fruit fly).